We begin with the raw amino-acid sequence, 249 residues long: Probable transcriptional regulatory protein A1S_1496 (249 aa).

It belongs to the TACO1 family.

Its subcellular location is the cytoplasm. In Acinetobacter baumannii (strain ATCC 17978 / DSM 105126 / CIP 53.77 / LMG 1025 / NCDC KC755 / 5377), this protein is Probable transcriptional regulatory protein A1S_1496.